Here is a 325-residue protein sequence, read N- to C-terminus: 7,8-didemethyl-8-hydroxy-5-deazariboflavin synthase (325 aa).

The 241-residue stretch at 1-241 (MTYSKNVFVP…SDIAVQVAPN (241 aa)) folds into the Radical SAM core domain. 3 residues coordinate [4Fe-4S] cluster: C15, C19, and C22.

Belongs to the radical SAM superfamily. CofG family. Consists of two subunits, CofG and CofH. [4Fe-4S] cluster is required as a cofactor.

It carries out the reaction 5-amino-5-(4-hydroxybenzyl)-6-(D-ribitylimino)-5,6-dihydrouracil + S-adenosyl-L-methionine = 7,8-didemethyl-8-hydroxy-5-deazariboflavin + 5'-deoxyadenosine + L-methionine + NH4(+) + H(+). Its pathway is cofactor biosynthesis; coenzyme F0 biosynthesis. In terms of biological role, catalyzes the radical-mediated synthesis of 7,8-didemethyl-8-hydroxy-5-deazariboflavin from 5-amino-5-(4-hydroxybenzyl)-6-(D-ribitylimino)-5,6-dihydrouracil. This Methanosarcina barkeri (strain Fusaro / DSM 804) protein is 7,8-didemethyl-8-hydroxy-5-deazariboflavin synthase.